Here is a 145-residue protein sequence, read N- to C-terminus: 3-dehydroquinate dehydratase (145 aa).

Tyr23 serves as the catalytic Proton acceptor. Positions 74, 80, and 87 each coordinate substrate. His100 (proton donor) is an active-site residue. Residues 101–102 (LS) and Arg111 contribute to the substrate site.

Belongs to the type-II 3-dehydroquinase family. Homododecamer.

It catalyses the reaction 3-dehydroquinate = 3-dehydroshikimate + H2O. It functions in the pathway metabolic intermediate biosynthesis; chorismate biosynthesis; chorismate from D-erythrose 4-phosphate and phosphoenolpyruvate: step 3/7. Its function is as follows. Catalyzes a trans-dehydration via an enolate intermediate. The chain is 3-dehydroquinate dehydratase from Bacillus licheniformis (strain ATCC 14580 / DSM 13 / JCM 2505 / CCUG 7422 / NBRC 12200 / NCIMB 9375 / NCTC 10341 / NRRL NRS-1264 / Gibson 46).